Reading from the N-terminus, the 301-residue chain is Putative S-adenosyl-L-methionine-dependent methyltransferase Mflv_5024 (301 aa).

Residues D129 and 158–159 (DL) each bind S-adenosyl-L-methionine.

The protein belongs to the UPF0677 family.

Its function is as follows. Exhibits S-adenosyl-L-methionine-dependent methyltransferase activity. The sequence is that of Putative S-adenosyl-L-methionine-dependent methyltransferase Mflv_5024 from Mycolicibacterium gilvum (strain PYR-GCK) (Mycobacterium gilvum (strain PYR-GCK)).